Here is a 432-residue protein sequence, read N- to C-terminus: SVP1-like protein 2 (432 aa).

WD repeat units lie at residues 223 to 263 and 268 to 307; these read AHKS…LLYE and LDRA…TSSG.

Belongs to the WD repeat PROPPIN family.

The protein resides in the vacuole membrane. The protein localises to the cytoplasmic vesicle membrane. Its function is as follows. Involved in mitochondrial or peroxisomal functions and amino acid signaling pathways. The sequence is that of SVP1-like protein 2 (HSV2) from Debaryomyces hansenii (strain ATCC 36239 / CBS 767 / BCRC 21394 / JCM 1990 / NBRC 0083 / IGC 2968) (Yeast).